The primary structure comprises 225 residues: Prolactin (225 aa).

The first 28 residues, 1–28 (MTIQGSDRKGTLLLLVMSNLLFCQNVHP), serve as a signal peptide directing secretion. Cysteines 32 and 37 form a disulfide. Phosphoserine is present on residues S52 and S116. 2 disulfide bridges follow: C84–C200 and C217–C225.

Belongs to the somatotropin/prolactin family. Interacts with PRLR.

It localises to the secreted. Its function is as follows. Prolactin acts primarily on the mammary gland by promoting lactation. This Alexandromys montebelli (Japanese grass vole) protein is Prolactin (PRL).